The sequence spans 305 residues: Delta-9 acyl-lipid desaturase 1 (305 aa).

The disordered stretch occupies residues 1-20; it reads MSLSASEKEENNKKMAADKA. Helical transmembrane passes span 39-59 and 60-80; these read IVKA…PFNF and TWPA…GITV. Fe cation-binding residues include His-83, His-88, His-120, His-123, and His-124. The short motif at 83–88 is the Histidine box-1 element; that stretch reads HRNLAH. The Histidine box-2 signature appears at 120–124; it reads HRYHH. Residues 180–200 traverse the membrane as a helical segment; that stretch reads VLYHILTFGFLLYYFGGLSFL. His-223, His-252, His-255, and His-256 together coordinate Fe cation. Residues 252–256 carry the Histidine box-3 motif; that stretch reads HNNHH. The chain crosses the membrane as a helical span at residues 268–288; that stretch reads WWQIDISWYIVRFLEIIGLAT.

Belongs to the fatty acid desaturase type 1 family. It depends on Fe cation as a cofactor. Strongly expressed in inflorescence meristems, leaves, and flowers, and weakly in roots and seedpods.

Its subcellular location is the endoplasmic reticulum membrane. It localises to the plastid. The protein localises to the chloroplast membrane. The protein operates within lipid metabolism; polyunsaturated fatty acid biosynthesis. Functionally, involved in delta-9 desaturation of fatty acids. Involved in the production of very-long-chain fatty acids (VLCFAs). May desaturate chloroplastic monogalactosyl diacylglycerol (MGDG) and alter chloroplast membrane fluidity, which is required to prime a cold acclimation response. This is Delta-9 acyl-lipid desaturase 1 from Arabidopsis thaliana (Mouse-ear cress).